The primary structure comprises 967 residues: Disks large homolog 1 (967 aa).

Positions 5-65 (SSEKAHKAIE…LYEQTLLSER (61 aa)) constitute an L27 domain. One can recognise a PDZ 1 domain in the interval 202–289 (NIVLEKGHTG…VVSLSLKRRK (88 aa)). A disordered region spans residues 324–351 (IHSPSAPIHPPPPPPVHHGSLSQLSVGQ). Positions 330 to 339 (PIHPPPPPPV) are enriched in pro residues. 2 PDZ domains span residues 361–448 (VIDL…QQGT) and 510–591 (PVQL…QYRP). Positions 619 to 690 (RKSEYVRALF…PSKKRVEKRE (72 aa)) constitute an SH3 domain. The segment at 673 to 723 (EETAEGVIPSKKRVEKRERLRRKQVNFNSGSQSLGRNSSTTGLENRRGSRS) is disordered. The span at 682–696 (SKKRVEKRERLRRKQ) shows a compositional bias: basic residues. Residues 697-715 (VNFNSGSQSLGRNSSTTGL) show a composition bias toward polar residues. The 187-residue stretch at 769–955 (VRPVIILGAL…VLSKVYSIIS (187 aa)) folds into the Guanylate kinase-like domain.

This sequence belongs to the MAGUK family. In terms of assembly, homooligomerizes; requires L27 domain. Interacts (via L27 domain) with ajm-1; the interaction regulates ajm-1 apical junction location. Expressed in the apical junctions in the hypodermis. Expressed in epithelial cells in the reproductive system including vulva, uterus and spermatheca.

The protein localises to the membrane. It is found in the apical cell membrane. It localises to the cell junction. The protein resides in the adherens junction. Its subcellular location is the lateral cell membrane. The protein localises to the cytoplasm. In terms of biological role, essential multidomain scaffolding protein required for normal development. Recruits channels, receptors and signaling molecules to discrete plasma membrane domains in polarized cells. Required for proper embryonic elongation. Acts upstream of ajm-1 and becomes localized to apical junctions independently of ajm-1. With let-413, cooperatively regulates ajm-1 localization to apical junctions and the establishment of newly formed epithelia. Plays a role in assembling the adherens junction by clustering ajm-1 and other proteins, to form electron-dense structures; may form a compartment distinct to that of hmp-1 and associated proteins. Plays a role in the directed outgrowth of seam cells, towards neighboring seam cells, during larval development. The polypeptide is Disks large homolog 1 (Caenorhabditis elegans).